The sequence spans 308 residues: Mitochondrial import receptor subunit TOM40B (308 aa).

Positions 281–308 are required for mitochondrial targeting; sequence PLPVTLALGAFLNHWRNRFHCGFSITVG.

The protein belongs to the Tom40 family. As to quaternary structure, forms part of the preprotein translocase of the outer mitochondrial membrane (TOM complex) containing TOMM22, TOMM40, TOMM40L and TOMM70. Interacts with mitochondrial targeting sequences. In terms of tissue distribution, widely expressed. Higher levels in heart, brain and liver, very low level in testis.

It is found in the mitochondrion outer membrane. Functionally, potential channel-forming protein implicated in import of protein precursors into mitochondria. The polypeptide is Mitochondrial import receptor subunit TOM40B (Rattus norvegicus (Rat)).